A 766-amino-acid polypeptide reads, in one-letter code: Phosphoribosylformylglycinamidine synthase subunit PurL (766 aa).

H49 is an active-site residue. 2 residues coordinate ATP: Y52 and K91. E93 is a binding site for Mg(2+). Substrate is bound by residues 94–97 and R116; that span reads SHNH. Catalysis depends on H95, which acts as the Proton acceptor. D117 is a binding site for Mg(2+). Q240 is a binding site for substrate. D268 serves as a coordination point for Mg(2+). 312–314 is a substrate binding site; that stretch reads ESQ. The ATP site is built by D508 and G545. N546 is a Mg(2+) binding site. S548 serves as a coordination point for substrate.

This sequence belongs to the FGAMS family. As to quaternary structure, monomer. Part of the FGAM synthase complex composed of 1 PurL, 1 PurQ and 2 PurS subunits.

The protein resides in the cytoplasm. The catalysed reaction is N(2)-formyl-N(1)-(5-phospho-beta-D-ribosyl)glycinamide + L-glutamine + ATP + H2O = 2-formamido-N(1)-(5-O-phospho-beta-D-ribosyl)acetamidine + L-glutamate + ADP + phosphate + H(+). The protein operates within purine metabolism; IMP biosynthesis via de novo pathway; 5-amino-1-(5-phospho-D-ribosyl)imidazole from N(2)-formyl-N(1)-(5-phospho-D-ribosyl)glycinamide: step 1/2. In terms of biological role, part of the phosphoribosylformylglycinamidine synthase complex involved in the purines biosynthetic pathway. Catalyzes the ATP-dependent conversion of formylglycinamide ribonucleotide (FGAR) and glutamine to yield formylglycinamidine ribonucleotide (FGAM) and glutamate. The FGAM synthase complex is composed of three subunits. PurQ produces an ammonia molecule by converting glutamine to glutamate. PurL transfers the ammonia molecule to FGAR to form FGAM in an ATP-dependent manner. PurS interacts with PurQ and PurL and is thought to assist in the transfer of the ammonia molecule from PurQ to PurL. This is Phosphoribosylformylglycinamidine synthase subunit PurL from Synechococcus sp. (strain CC9902).